Here is a 223-residue protein sequence, read N- to C-terminus: Probable transaldolase (223 aa).

Catalysis depends on lysine 91, which acts as the Schiff-base intermediate with substrate.

It belongs to the transaldolase family. Type 3B subfamily.

The protein localises to the cytoplasm. It carries out the reaction D-sedoheptulose 7-phosphate + D-glyceraldehyde 3-phosphate = D-erythrose 4-phosphate + beta-D-fructose 6-phosphate. It functions in the pathway carbohydrate degradation; pentose phosphate pathway; D-glyceraldehyde 3-phosphate and beta-D-fructose 6-phosphate from D-ribose 5-phosphate and D-xylulose 5-phosphate (non-oxidative stage): step 2/3. In terms of biological role, transaldolase is important for the balance of metabolites in the pentose-phosphate pathway. In Chlorobium phaeobacteroides (strain BS1), this protein is Probable transaldolase.